Consider the following 425-residue polypeptide: Serine--tRNA ligase (425 aa).

Position 233-235 (233-235 (TAE)) interacts with L-serine. 264–266 (RRE) is a binding site for ATP. Position 287 (glutamate 287) interacts with L-serine. 351–354 (EISS) is a binding site for ATP. An L-serine-binding site is contributed by serine 387.

The protein belongs to the class-II aminoacyl-tRNA synthetase family. Type-1 seryl-tRNA synthetase subfamily. In terms of assembly, homodimer. The tRNA molecule binds across the dimer.

Its subcellular location is the cytoplasm. The catalysed reaction is tRNA(Ser) + L-serine + ATP = L-seryl-tRNA(Ser) + AMP + diphosphate + H(+). It catalyses the reaction tRNA(Sec) + L-serine + ATP = L-seryl-tRNA(Sec) + AMP + diphosphate + H(+). The protein operates within aminoacyl-tRNA biosynthesis; selenocysteinyl-tRNA(Sec) biosynthesis; L-seryl-tRNA(Sec) from L-serine and tRNA(Sec): step 1/1. Its function is as follows. Catalyzes the attachment of serine to tRNA(Ser). Is also able to aminoacylate tRNA(Sec) with serine, to form the misacylated tRNA L-seryl-tRNA(Sec), which will be further converted into selenocysteinyl-tRNA(Sec). The protein is Serine--tRNA ligase of Thermotoga petrophila (strain ATCC BAA-488 / DSM 13995 / JCM 10881 / RKU-1).